The sequence spans 272 residues: Glutamate 5-kinase (272 aa).

Lys-14 contributes to the ATP binding site. Substrate is bound by residues Ser-54, Asp-141, and Asn-157. ATP is bound by residues 177–178 and 219–225; these read SD and TGGMLSK.

Belongs to the glutamate 5-kinase family.

Its subcellular location is the cytoplasm. The catalysed reaction is L-glutamate + ATP = L-glutamyl 5-phosphate + ADP. The protein operates within amino-acid biosynthesis; L-proline biosynthesis; L-glutamate 5-semialdehyde from L-glutamate: step 1/2. In terms of biological role, catalyzes the transfer of a phosphate group to glutamate to form L-glutamate 5-phosphate. In Streptococcus pyogenes serotype M28 (strain MGAS6180), this protein is Glutamate 5-kinase.